Here is a 460-residue protein sequence, read N- to C-terminus: Argininosuccinate lyase (460 aa).

The protein belongs to the lyase 1 family. Argininosuccinate lyase subfamily.

It localises to the cytoplasm. The enzyme catalyses 2-(N(omega)-L-arginino)succinate = fumarate + L-arginine. Its pathway is amino-acid biosynthesis; L-arginine biosynthesis; L-arginine from L-ornithine and carbamoyl phosphate: step 3/3. This Lawsonia intracellularis (strain PHE/MN1-00) protein is Argininosuccinate lyase.